The sequence spans 147 residues: uncharacterized protein (147 aa).

Topologically, residues 1 to 16 are extracellular; that stretch reads MDHRAAFGYFSNACFK. A helical transmembrane segment spans residues 17–37; it reads VMLFSSLLASFASSVAFISLI. Topologically, residues 38–105 are cytoplasmic; it reads TFSLSSSESP…FEAAFFLLTN (68 aa). A helical transmembrane segment spans residues 106–126; it reads EMIFFILYYFFSCLMFFYVAS. The Extracellular portion of the chain corresponds to 127-147; sequence ERNTNPKILQTINTKPLYIKN.

It localises to the membrane. This is an uncharacterized protein from Saccharomyces cerevisiae (strain ATCC 204508 / S288c) (Baker's yeast).